The primary structure comprises 415 residues: Serine hydroxymethyltransferase (415 aa).

Basic and acidic residues predominate over residues 1 to 10 (MERSHIRDVD). Residues 1–21 (MERSHIRDVDPDAADALSSER) form a disordered region. (6S)-5,6,7,8-tetrahydrofolate-binding positions include Leu119 and 123–125 (GHL). Lys228 is subject to N6-(pyridoxal phosphate)lysine. 353–355 (SAF) contributes to the (6S)-5,6,7,8-tetrahydrofolate binding site.

This sequence belongs to the SHMT family. Homodimer. The cofactor is pyridoxal 5'-phosphate.

It is found in the cytoplasm. It catalyses the reaction (6R)-5,10-methylene-5,6,7,8-tetrahydrofolate + glycine + H2O = (6S)-5,6,7,8-tetrahydrofolate + L-serine. The protein operates within one-carbon metabolism; tetrahydrofolate interconversion. Its pathway is amino-acid biosynthesis; glycine biosynthesis; glycine from L-serine: step 1/1. In terms of biological role, catalyzes the reversible interconversion of serine and glycine with tetrahydrofolate (THF) serving as the one-carbon carrier. Also exhibits THF-independent aldolase activity toward beta-hydroxyamino acids, producing glycine and aldehydes, via a retro-aldol mechanism. The chain is Serine hydroxymethyltransferase from Haloquadratum walsbyi (strain DSM 16790 / HBSQ001).